The chain runs to 245 residues: Putative protein phosphatase 2C-like protein 45 (245 aa).

Positions 1 to 188 constitute a PPM-type phosphatase domain; it reads MEDRFSTITN…DDISVMLIPL (188 aa).

The protein belongs to the PP2C family.

In Arabidopsis thaliana (Mouse-ear cress), this protein is Putative protein phosphatase 2C-like protein 45.